The chain runs to 256 residues: MLAKRIIPCLDVTNGRVVKGVNFVELRDAGDPVEIARRYDEQGADEITFLDITATSDGRDLILHIIEAVASQVFIPLTVGGGVRAVEDVRRLLNAGADKISVNSSAIANPQLVSDATGKYGSQCIVVAIDAKRSSAPGEPPRWEVFTHGGRKATGLDAVEWAKEMAARGAGEILLTSMDRDGTKSGFDLELTRAVSDAVPVPVIASGGVGGLQDLADGIRLGHADAVLAASIFHYGQHTVGEAKAFMAREGIPVRI.

Catalysis depends on residues aspartate 11 and aspartate 130.

This sequence belongs to the HisA/HisF family. Heterodimer of HisH and HisF.

It localises to the cytoplasm. It catalyses the reaction 5-[(5-phospho-1-deoxy-D-ribulos-1-ylimino)methylamino]-1-(5-phospho-beta-D-ribosyl)imidazole-4-carboxamide + L-glutamine = D-erythro-1-(imidazol-4-yl)glycerol 3-phosphate + 5-amino-1-(5-phospho-beta-D-ribosyl)imidazole-4-carboxamide + L-glutamate + H(+). The protein operates within amino-acid biosynthesis; L-histidine biosynthesis; L-histidine from 5-phospho-alpha-D-ribose 1-diphosphate: step 5/9. Functionally, IGPS catalyzes the conversion of PRFAR and glutamine to IGP, AICAR and glutamate. The HisF subunit catalyzes the cyclization activity that produces IGP and AICAR from PRFAR using the ammonia provided by the HisH subunit. This Cupriavidus pinatubonensis (strain JMP 134 / LMG 1197) (Cupriavidus necator (strain JMP 134)) protein is Imidazole glycerol phosphate synthase subunit HisF.